Here is a 538-residue protein sequence, read N- to C-terminus: uncharacterized protein (538 aa).

Positions 1–17 are cleaved as a signal peptide; the sequence is MNLQILLLLLLFCHVAA. An N-linked (GlcNAc...) asparagine glycan is attached at asparagine 115.

This is an uncharacterized protein from Caenorhabditis elegans.